A 101-amino-acid polypeptide reads, in one-letter code: NAD(P)H-quinone oxidoreductase subunit 4L, chloroplastic (101 aa).

3 consecutive transmembrane segments (helical) span residues Met-2–Ile-22, Met-32–Phe-52, and Ile-61–Val-81.

This sequence belongs to the complex I subunit 4L family. As to quaternary structure, NDH is composed of at least 16 different subunits, 5 of which are encoded in the nucleus.

The protein localises to the plastid. Its subcellular location is the chloroplast thylakoid membrane. It carries out the reaction a plastoquinone + NADH + (n+1) H(+)(in) = a plastoquinol + NAD(+) + n H(+)(out). The catalysed reaction is a plastoquinone + NADPH + (n+1) H(+)(in) = a plastoquinol + NADP(+) + n H(+)(out). Its function is as follows. NDH shuttles electrons from NAD(P)H:plastoquinone, via FMN and iron-sulfur (Fe-S) centers, to quinones in the photosynthetic chain and possibly in a chloroplast respiratory chain. The immediate electron acceptor for the enzyme in this species is believed to be plastoquinone. Couples the redox reaction to proton translocation, and thus conserves the redox energy in a proton gradient. The protein is NAD(P)H-quinone oxidoreductase subunit 4L, chloroplastic of Vitis vinifera (Grape).